The primary structure comprises 307 residues: Serine/threonine-protein phosphatase 4 catalytic subunit (307 aa).

Residues Asp-54, His-56, Asp-82, and Asn-114 each coordinate Mn(2+). Residue His-115 is the Proton donor of the active site. Positions 164 and 238 each coordinate Mn(2+). Residue Leu-307 is modified to Leucine methyl ester.

It belongs to the PPP phosphatase family. PP-4 (PP-X) subfamily. In terms of assembly, serine/threonine-protein phosphatase 4 (PP4) occurs in different assemblies of the catalytic and one or more regulatory subunits. Probably part of a PP4 PPP4C-PPP4R2-PPP4R3 complex containing Pp4-19C, PPP4R2r and flfl. Interacts with Ptpa; thereby mediating basal localization of the Miranda (Mira) complex; probably by dephosphorylation of Mira. Mn(2+) serves as cofactor. Post-translationally, reversibly methyl esterified on Leu-307 by leucine carboxyl methyltransferase 1 (LCMT1) and protein phosphatase methylesterase 1 (PPME1). Carboxyl methylation influences the affinity of the catalytic subunit for the different regulatory subunits, thereby modulating the PP2A holoenzyme's substrate specificity, enzyme activity and cellular localization.

The protein resides in the cytoplasm. It localises to the nucleus. The protein localises to the cytoskeleton. It is found in the microtubule organizing center. Its subcellular location is the centrosome. It catalyses the reaction O-phospho-L-seryl-[protein] + H2O = L-seryl-[protein] + phosphate. The enzyme catalyses O-phospho-L-threonyl-[protein] + H2O = L-threonyl-[protein] + phosphate. Protein phosphatase that regulates many processes such as microtubule organization at centrosomes. The probable PP4 complex Pp4-19C-PPP4R2r-flfl (PPP4C-PPP4R2-PPP4R3) is required to prevent caspase-induced cell death (in vitro). The chain is Serine/threonine-protein phosphatase 4 catalytic subunit (Pp4-19C) from Drosophila melanogaster (Fruit fly).